We begin with the raw amino-acid sequence, 415 residues long: MRLKRMHIRYYPPGIFLDYEKGGQLRTKCIDLLNLTPETDVEELVLEIRAAEPLITSSCVEQVKLLICKLQEKVGQKDERKFYLFRALQAHILPLTNVAFNKSGSCFITGSYDRTCKIWDTASGEELHTLEGHRNVVYAIAFNNPYGDKVATGSFDKTCKLWSAETGKCFYTFRGHTAEIVCLAFNPQSTLVATGSMDTTAKLWDVESGEEVSTLAGHFAEIISLCFNTTGDRLVTGSFDHTAILWDVPSGRKVHVLSGHRGEISCVQFNWDCSLIATASLDKSCKVWDAEGGQCLATLLGHNDEVLDVCFNYTGQLIATASADGTSRVFSTDTFQCLCQLEGHKGEISKVCFNAQGSRVLTASVDKTSRVWCVKTGACLQVLEGHSDEIFSCAFNYEGDTIITGSKDNTCRIWH.

8 WD repeats span residues 90–129, 132–172, 175–214, 217–256, 259–298, 301–340, 343–384, and 385–415; these read AHIL…ELHT, GHRN…CFYT, GHTA…EVST, GHFA…KVHV, GHRG…CLAT, GHND…CLCQ, GHKG…QVLE, and GHSD…RIWH.

Belongs to the WD repeat WDR69 family. Expressed in organs bearing motile cilia, including the pronephros, otic vesicles and Kupffer's vesicle.

It localises to the cytoplasm. The protein resides in the cytoskeleton. The protein localises to the flagellum basal body. Its subcellular location is the flagellum axoneme. In terms of biological role, required for axonemal dynein assembly and ciliary motility in ciliated organs, including Kupffer's vesicle, during embryogenesis. Facilitates the onset of robust cilia motility during development. This is Dynein assembly factor with WD repeat domains 1 (daw1) from Danio rerio (Zebrafish).